Consider the following 501-residue polypeptide: Glycerol kinase (501 aa).

Position 14 (T14) interacts with ADP. T14, T15, and S16 together coordinate ATP. Residue T14 coordinates sn-glycerol 3-phosphate. R18 is a binding site for ADP. Sn-glycerol 3-phosphate contacts are provided by R84, E85, Y135, and D244. Glycerol is bound by residues R84, E85, Y135, D244, and Q245. Positions 266 and 309 each coordinate ADP. ATP is bound by residues T266, G309, Q313, and G410. G410 and N414 together coordinate ADP.

Belongs to the FGGY kinase family.

It catalyses the reaction glycerol + ATP = sn-glycerol 3-phosphate + ADP + H(+). It participates in polyol metabolism; glycerol degradation via glycerol kinase pathway; sn-glycerol 3-phosphate from glycerol: step 1/1. Its activity is regulated as follows. Inhibited by fructose 1,6-bisphosphate (FBP). In terms of biological role, key enzyme in the regulation of glycerol uptake and metabolism. Catalyzes the phosphorylation of glycerol to yield sn-glycerol 3-phosphate. The polypeptide is Glycerol kinase (Deinococcus radiodurans (strain ATCC 13939 / DSM 20539 / JCM 16871 / CCUG 27074 / LMG 4051 / NBRC 15346 / NCIMB 9279 / VKM B-1422 / R1)).